The sequence spans 1017 residues: Probable isoleucine--tRNA ligase, cytoplasmic (1017 aa).

The 'HIGH' region signature appears at P45 to H55. Residues K609–R613 carry the 'KMSKS' region motif. ATP is bound at residue K612.

It belongs to the class-I aminoacyl-tRNA synthetase family.

Its subcellular location is the cytoplasm. It carries out the reaction tRNA(Ile) + L-isoleucine + ATP = L-isoleucyl-tRNA(Ile) + AMP + diphosphate. This chain is Probable isoleucine--tRNA ligase, cytoplasmic, found in Encephalitozoon cuniculi (strain GB-M1) (Microsporidian parasite).